We begin with the raw amino-acid sequence, 657 residues long: L-glutamate oxidase precursor (657 aa).

Residues 1-12 (MTETPRDNSATR) form the signal peptide. Residues Glu-86, Ala-87, Arg-95, Met-120, Arg-121, Met-350, Glu-639, Trp-647, and Ile-648 each coordinate FAD.

The protein belongs to the flavin monoamine oxidase family. LGOX subfamily. The mature enzyme is a heterohexamer composed of 2 alpha chains, 2 beta chains and 2 gamma chains (alpha2beta2gamma2). The cofactor is FAD. Post-translationally, the precursor form is proteolytically cleaved by an endopeptidase into alpha, beta and gamma chains, which form the stable mature enzyme.

It localises to the secreted. It carries out the reaction L-glutamate + O2 + H2O = H2O2 + 2-oxoglutarate + NH4(+). With respect to regulation, proteinase K-treated enzyme exhibits improved affinity for the substrate, increased activity and increased thermostability. Functionally, catalyzes the oxidative deamination of L-glutamate to 2-ketoglutarate along with the production of ammonia and hydrogen peroxide. Exhibits strict specificity for L-glutamate, and shows only very weak activity with L-glutamine. The polypeptide is L-glutamate oxidase precursor (Streptomyces diastatochromogenes).